A 247-amino-acid chain; its full sequence is ATP synthase subunit a, chloroplastic (247 aa).

Helical transmembrane passes span 38-58, 95-115, 134-154, 199-219, and 220-240; these read QVLI…VIAV, VPFI…GALL, INTT…AGLS, LVVV…VMFL, and GLFT…AYIG.

It belongs to the ATPase A chain family. In terms of assembly, F-type ATPases have 2 components, CF(1) - the catalytic core - and CF(0) - the membrane proton channel. CF(1) has five subunits: alpha(3), beta(3), gamma(1), delta(1), epsilon(1). CF(0) has four main subunits: a, b, b' and c.

It localises to the plastid. Its subcellular location is the chloroplast thylakoid membrane. In terms of biological role, key component of the proton channel; it plays a direct role in the translocation of protons across the membrane. The sequence is that of ATP synthase subunit a, chloroplastic from Lolium perenne (Perennial ryegrass).